We begin with the raw amino-acid sequence, 279 residues long: 4-hydroxy-3-methylbut-2-enyl diphosphate reductase (279 aa).

Cysteine 12 is a [4Fe-4S] cluster binding site. Residues histidine 36 and histidine 70 each contribute to the (2E)-4-hydroxy-3-methylbut-2-enyl diphosphate site. Histidine 36 and histidine 70 together coordinate dimethylallyl diphosphate. Isopentenyl diphosphate contacts are provided by histidine 36 and histidine 70. Cysteine 92 is a [4Fe-4S] cluster binding site. Histidine 120 serves as a coordination point for (2E)-4-hydroxy-3-methylbut-2-enyl diphosphate. Histidine 120 contacts dimethylallyl diphosphate. Histidine 120 contacts isopentenyl diphosphate. Glutamate 122 (proton donor) is an active-site residue. Threonine 158 contributes to the (2E)-4-hydroxy-3-methylbut-2-enyl diphosphate binding site. Residue cysteine 186 participates in [4Fe-4S] cluster binding. Residues serine 214, serine 215, asparagine 216, and serine 258 each coordinate (2E)-4-hydroxy-3-methylbut-2-enyl diphosphate. Residues serine 214, serine 215, asparagine 216, and serine 258 each coordinate dimethylallyl diphosphate. Isopentenyl diphosphate-binding residues include serine 214, serine 215, asparagine 216, and serine 258.

This sequence belongs to the IspH family. Requires [4Fe-4S] cluster as cofactor.

It catalyses the reaction isopentenyl diphosphate + 2 oxidized [2Fe-2S]-[ferredoxin] + H2O = (2E)-4-hydroxy-3-methylbut-2-enyl diphosphate + 2 reduced [2Fe-2S]-[ferredoxin] + 2 H(+). It carries out the reaction dimethylallyl diphosphate + 2 oxidized [2Fe-2S]-[ferredoxin] + H2O = (2E)-4-hydroxy-3-methylbut-2-enyl diphosphate + 2 reduced [2Fe-2S]-[ferredoxin] + 2 H(+). It functions in the pathway isoprenoid biosynthesis; dimethylallyl diphosphate biosynthesis; dimethylallyl diphosphate from (2E)-4-hydroxy-3-methylbutenyl diphosphate: step 1/1. It participates in isoprenoid biosynthesis; isopentenyl diphosphate biosynthesis via DXP pathway; isopentenyl diphosphate from 1-deoxy-D-xylulose 5-phosphate: step 6/6. Catalyzes the conversion of 1-hydroxy-2-methyl-2-(E)-butenyl 4-diphosphate (HMBPP) into a mixture of isopentenyl diphosphate (IPP) and dimethylallyl diphosphate (DMAPP). Acts in the terminal step of the DOXP/MEP pathway for isoprenoid precursor biosynthesis. The polypeptide is 4-hydroxy-3-methylbut-2-enyl diphosphate reductase (Campylobacter fetus subsp. fetus (strain 82-40)).